A 383-amino-acid chain; its full sequence is Chaperone protein DnaJ (383 aa).

The J domain occupies 6-71; sequence DYYEVLGVSK…QKRSQYDQFG (66 aa). The CR-type zinc finger occupies 141–223; that stretch reads GVEKKVKVKK…CKGEGVEIGE (83 aa). Zn(2+) contacts are provided by cysteine 154, cysteine 157, cysteine 171, cysteine 174, cysteine 197, cysteine 200, cysteine 211, and cysteine 214. CXXCXGXG motif repeat units follow at residues 154-161, 171-178, 197-204, and 211-218; these read CSKCRGDG, CQTCHGTG, CPTCHGEG, and CSKCKGEG.

It belongs to the DnaJ family. In terms of assembly, homodimer. It depends on Zn(2+) as a cofactor.

The protein localises to the cytoplasm. In terms of biological role, participates actively in the response to hyperosmotic and heat shock by preventing the aggregation of stress-denatured proteins and by disaggregating proteins, also in an autonomous, DnaK-independent fashion. Unfolded proteins bind initially to DnaJ; upon interaction with the DnaJ-bound protein, DnaK hydrolyzes its bound ATP, resulting in the formation of a stable complex. GrpE releases ADP from DnaK; ATP binding to DnaK triggers the release of the substrate protein, thus completing the reaction cycle. Several rounds of ATP-dependent interactions between DnaJ, DnaK and GrpE are required for fully efficient folding. Also involved, together with DnaK and GrpE, in the DNA replication of plasmids through activation of initiation proteins. The sequence is that of Chaperone protein DnaJ from Porphyromonas gingivalis (strain ATCC BAA-308 / W83).